The chain runs to 196 residues: SAGA-associated factor 11 homolog (196 aa).

The interval M1–T22 is disordered. The SGF11-type zinc finger occupies C106 to C127. Residues T144 to F196 form a disordered region. Phosphoserine is present on S172. Positions N180–F196 are enriched in low complexity.

The protein belongs to the SGF11 family. Component of some SAGA transcription coactivator-HAT complexes, at least composed of Ada2b, not/nonstop, Pcaf/Gcn5, Sgf11 and Spt3. Within the SAGA complex, Sgf11, e(y)2, and not/nonstop form an additional subcomplex of SAGA called the DUB module (deubiquitination module). Interacts directly with not/nonstop. Interacts with the AMEX complex component xmas-2. Interacts with Cbp80; important for promoter recruitment of Sgf11 that is not associated with the DUB module.

It localises to the nucleus. Its subcellular location is the nucleoplasm. The protein resides in the cytoplasm. Its function is as follows. Component of the transcription regulatory histone acetylation (HAT) complex SAGA, a multiprotein complex that activates transcription by remodeling chromatin and mediating histone acetylation and deubiquitination. Within the SAGA complex, participates in a subcomplex that specifically deubiquitinates histone H2B. The SAGA complex is recruited to specific gene promoters by activators, where it is required for transcription. Required for nuclear receptor-mediated transactivation. Binds independently on SAGA to promoters in an RNA-dependent manner. Binds to mRNA and is essential for total mRNA export from the nucleus. Required to counteract heterochromatin silencing. Controls the development of neuronal connectivity in visual system by being required for accurate axon targeting in the optic lobe. Required for expression of ecdysone-induced genes such as br/broad. This Drosophila erecta (Fruit fly) protein is SAGA-associated factor 11 homolog.